A 77-amino-acid polypeptide reads, in one-letter code: MKLTCMVIVAVLFLTANTFVTADDSGNGLENLFSKAHHEIKNPEASNLNKRCIPFLHPCTFFFPDCCNSICAQFICL.

Positions 1–22 (MKLTCMVIVAVLFLTANTFVTA) are cleaved as a signal peptide. A propeptide spanning residues 23-51 (DDSGNGLENLFSKAHHEIKNPEASNLNKR) is cleaved from the precursor. 3 disulfide bridges follow: Cys-52-Cys-67, Cys-59-Cys-71, and Cys-66-Cys-76.

Expressed by the venom duct.

The protein localises to the secreted. The polypeptide is Conotoxin Vc6c (Conus victoriae (Queen Victoria cone)).